An 88-amino-acid chain; its full sequence is Small ribosomal subunit protein uS17 (88 aa).

This sequence belongs to the universal ribosomal protein uS17 family. Part of the 30S ribosomal subunit.

In terms of biological role, one of the primary rRNA binding proteins, it binds specifically to the 5'-end of 16S ribosomal RNA. In Syntrophotalea carbinolica (strain DSM 2380 / NBRC 103641 / GraBd1) (Pelobacter carbinolicus), this protein is Small ribosomal subunit protein uS17.